Consider the following 153-residue polypeptide: Endoribonuclease YbeY (153 aa).

Zn(2+) is bound by residues His-118, His-122, and His-128.

It belongs to the endoribonuclease YbeY family. Requires Zn(2+) as cofactor.

It is found in the cytoplasm. In terms of biological role, single strand-specific metallo-endoribonuclease involved in late-stage 70S ribosome quality control and in maturation of the 3' terminus of the 16S rRNA. The sequence is that of Endoribonuclease YbeY from Staphylococcus haemolyticus (strain JCSC1435).